The following is a 255-amino-acid chain: Cyclase-like protein 1 (255 aa).

Residues 1-24 (MTRSVSFPLFLFAVVLSLSSSLLA) form the signal peptide.

Belongs to the Cyclase 1 superfamily.

It localises to the secreted. The protein localises to the extracellular space. It is found in the extracellular matrix. In terms of biological role, acts as a negative regulator of fumonisin B1- and pathogen-induced programmed cell death (PCD), and regulates pathogen-induced symptom development. May function redundantly with CYCLASE2 for normal plant growth, development and viability. The chain is Cyclase-like protein 1 from Arabidopsis thaliana (Mouse-ear cress).